Consider the following 89-residue polypeptide: Long neurotoxin 1 (89 aa).

The first 21 residues, 1-21, serve as a signal peptide directing secretion; it reads MKTLLLTLVVVTIVCLDLGDS. Cystine bridges form between C24-C41, C34-C58, C62-C74, and C75-C80.

It belongs to the three-finger toxin family. Long-chain subfamily. Type II alpha-neurotoxin sub-subfamily. Expressed by the venom gland.

It localises to the secreted. Functionally, binds with high affinity to muscular (alpha-1/CHRNA1) and neuronal (alpha-7/CHRNA7) nicotinic acetylcholine receptor (nAChR) and inhibits acetylcholine from binding to the receptor, thereby impairing neuromuscular and neuronal transmission. The protein is Long neurotoxin 1 of Pseudonaja textilis (Eastern brown snake).